The primary structure comprises 303 residues: Diaminopimelate epimerase (303 aa).

Substrate contacts are provided by asparagine 15, glutamine 47, and asparagine 67. Cysteine 76 (proton donor) is an active-site residue. Substrate is bound by residues glycine 77–asparagine 78, asparagine 163, asparagine 197, and glutamate 215–arginine 216. Catalysis depends on cysteine 224, which acts as the Proton acceptor. Residue glycine 225–serine 226 participates in substrate binding. A disordered region spans residues aspartate 279 to alanine 303.

It belongs to the diaminopimelate epimerase family. Homodimer.

The protein localises to the cytoplasm. The catalysed reaction is (2S,6S)-2,6-diaminopimelate = meso-2,6-diaminopimelate. Its pathway is amino-acid biosynthesis; L-lysine biosynthesis via DAP pathway; DL-2,6-diaminopimelate from LL-2,6-diaminopimelate: step 1/1. Functionally, catalyzes the stereoinversion of LL-2,6-diaminopimelate (L,L-DAP) to meso-diaminopimelate (meso-DAP), a precursor of L-lysine and an essential component of the bacterial peptidoglycan. The protein is Diaminopimelate epimerase of Brucella canis (strain ATCC 23365 / NCTC 10854 / RM-666).